Here is a 437-residue protein sequence, read N- to C-terminus: Enolase (437 aa).

Residues His-160 and Glu-169 each contribute to the substrate site. Glu-212 serves as the catalytic Proton donor. Residues Asp-247, Glu-296, and Asp-321 each contribute to the Mg(2+) site. Substrate contacts are provided by Glu-296 and Asp-321. The Proton acceptor role is filled by Lys-346. Residues 373–376 (SHRS) and Lys-397 contribute to the substrate site.

The protein belongs to the enolase family. Homodimer. It depends on Mg(2+) as a cofactor.

It localises to the cytoplasm. The catalysed reaction is (2R)-2-phosphoglycerate = phosphoenolpyruvate + H2O. It functions in the pathway carbohydrate degradation; glycolysis; pyruvate from D-glyceraldehyde 3-phosphate: step 4/5. This is Enolase (ENO) from Eremothecium gossypii (strain ATCC 10895 / CBS 109.51 / FGSC 9923 / NRRL Y-1056) (Yeast).